Here is a 65-residue protein sequence, read N- to C-terminus: Protein translocase subunit SecE (65 aa).

Topologically, residues 1–34 are cytoplasmic; sequence MEKLRKFFREVIAEAKKISWPSRKELLTSFGVVL. The helical transmembrane segment at 35-51 threads the bilayer; the sequence is VILAVTSVYFFVLDFIF. Residues 52–65 are Extracellular-facing; that stretch reads SGVVSAIFKALGIG.

The protein belongs to the SecE/SEC61-gamma family. In terms of assembly, component of the Sec protein translocase complex. Heterotrimer consisting of SecY, SecE and SecG subunits. The heterotrimers can form oligomers, although 1 heterotrimer is thought to be able to translocate proteins. Interacts with SecDF, and other proteins may be involved. The channel interacts with SecA via subunit SecY.

Its subcellular location is the cell inner membrane. Its function is as follows. Essential subunit of the protein translocation channel SecYEG. Clamps together the 2 halves of SecY. May contact the channel plug during translocation. The sequence is that of Protein translocase subunit SecE from Thermotoga maritima (strain ATCC 43589 / DSM 3109 / JCM 10099 / NBRC 100826 / MSB8).